A 172-amino-acid polypeptide reads, in one-letter code: Inorganic pyrophosphatase (172 aa).

The substrate site is built by Lys-29, Arg-43, and Tyr-55. 3 residues coordinate Mg(2+): Asp-65, Asp-70, and Asp-102. Tyr-141 lines the substrate pocket.

This sequence belongs to the PPase family. Homohexamer. Mg(2+) serves as cofactor.

It localises to the cytoplasm. The enzyme catalyses diphosphate + H2O = 2 phosphate + H(+). Functionally, catalyzes the hydrolysis of inorganic pyrophosphate (PPi) forming two phosphate ions. The sequence is that of Inorganic pyrophosphatase from Rickettsia prowazekii (strain Madrid E).